Here is a 231-residue protein sequence, read N- to C-terminus: Dephospho-CoA kinase (231 aa).

In terms of domain architecture, DPCK spans 29–231; it reads RVGLTGGIAS…IAGALRFDRR (203 aa). 37–42 contributes to the ATP binding site; it reads ASGKST.

It belongs to the CoaE family.

The protein resides in the cytoplasm. It carries out the reaction 3'-dephospho-CoA + ATP = ADP + CoA + H(+). It functions in the pathway cofactor biosynthesis; coenzyme A biosynthesis; CoA from (R)-pantothenate: step 5/5. Functionally, catalyzes the phosphorylation of the 3'-hydroxyl group of dephosphocoenzyme A to form coenzyme A. The protein is Dephospho-CoA kinase of Cutibacterium acnes (strain DSM 16379 / KPA171202) (Propionibacterium acnes).